The sequence spans 306 residues: Pantothenate kinase (306 aa).

Gly91–Ser98 lines the ATP pocket.

It belongs to the prokaryotic pantothenate kinase family.

It is found in the cytoplasm. The catalysed reaction is (R)-pantothenate + ATP = (R)-4'-phosphopantothenate + ADP + H(+). It functions in the pathway cofactor biosynthesis; coenzyme A biosynthesis; CoA from (R)-pantothenate: step 1/5. This is Pantothenate kinase (coaA) from Streptococcus pyogenes serotype M18 (strain MGAS8232).